The sequence spans 195 residues: Cytochrome c oxidase assembly protein CtaG (195 aa).

The Cytoplasmic portion of the chain corresponds to 1 to 7 (MSGGKPR). Residues 8 to 30 (SNTRTVAMLAGVVVLMGALSWAA) traverse the membrane as a helical; Signal-anchor for type II membrane protein segment. Residues 31–195 (VPFYSWFCKV…LDAKTEPTVN (165 aa)) lie on the Periplasmic side of the membrane.

It belongs to the COX11/CtaG family.

It localises to the cell inner membrane. In terms of biological role, exerts its effect at some terminal stage of cytochrome c oxidase synthesis, probably by being involved in the insertion of the copper B into subunit I. This chain is Cytochrome c oxidase assembly protein CtaG, found in Paracoccus denitrificans (strain Pd 1222).